Reading from the N-terminus, the 492-residue chain is Acetyl-coenzyme A carboxylase carboxyl transferase subunit beta, chloroplastic (492 aa).

Positions 198–219 are disordered; sequence STNGSDLTISESSNESESSNES. Positions 228–492 constitute a CoA carboxyltransferase N-terminal domain; that stretch reads LWVQCENCYG…FHGRFPLNQN (265 aa). The Zn(2+) site is built by cysteine 232, cysteine 235, cysteine 251, and cysteine 254. The C4-type zinc-finger motif lies at 232-254; that stretch reads CENCYGLNYKKFLKSKMYLCEQC.

This sequence belongs to the AccD/PCCB family. In terms of assembly, acetyl-CoA carboxylase is a heterohexamer composed of biotin carboxyl carrier protein, biotin carboxylase and 2 subunits each of ACCase subunit alpha and ACCase plastid-coded subunit beta (accD). The cofactor is Zn(2+).

It is found in the plastid. It localises to the chloroplast stroma. The enzyme catalyses N(6)-carboxybiotinyl-L-lysyl-[protein] + acetyl-CoA = N(6)-biotinyl-L-lysyl-[protein] + malonyl-CoA. The protein operates within lipid metabolism; malonyl-CoA biosynthesis; malonyl-CoA from acetyl-CoA: step 1/1. Functionally, component of the acetyl coenzyme A carboxylase (ACC) complex. Biotin carboxylase (BC) catalyzes the carboxylation of biotin on its carrier protein (BCCP) and then the CO(2) group is transferred by the transcarboxylase to acetyl-CoA to form malonyl-CoA. The chain is Acetyl-coenzyme A carboxylase carboxyl transferase subunit beta, chloroplastic from Citrus sinensis (Sweet orange).